The sequence spans 429 residues: Glutamate-1-semialdehyde 2,1-aminomutase (429 aa).

Position 265 is an N6-(pyridoxal phosphate)lysine (Lys-265).

It belongs to the class-III pyridoxal-phosphate-dependent aminotransferase family. HemL subfamily. As to quaternary structure, homodimer. It depends on pyridoxal 5'-phosphate as a cofactor.

The protein localises to the cytoplasm. It catalyses the reaction (S)-4-amino-5-oxopentanoate = 5-aminolevulinate. It functions in the pathway porphyrin-containing compound metabolism; protoporphyrin-IX biosynthesis; 5-aminolevulinate from L-glutamyl-tRNA(Glu): step 2/2. The polypeptide is Glutamate-1-semialdehyde 2,1-aminomutase (Shewanella halifaxensis (strain HAW-EB4)).